The sequence spans 597 residues: Probable methyltransferase-like protein 25 (597 aa).

A compositionally biased stretch (basic and acidic residues) spans 245–254 (ECKGDAESVQ). 2 disordered regions span residues 245-265 (ECKG…DLSA) and 317-342 (TSSQ…KARD). Over residues 317-326 (TSSQVQNTEK) the composition is skewed to polar residues.

Functionally, probable methyltransferase. This chain is Probable methyltransferase-like protein 25 (Mettl25), found in Mus musculus (Mouse).